Reading from the N-terminus, the 284-residue chain is Spermidine synthase (284 aa).

The 236-residue stretch at N6–L241 folds into the PABS domain. Q37 provides a ligand contact to S-adenosyl 3-(methylsulfanyl)propylamine. Y67 serves as a coordination point for putrescine. S-adenosyl 3-(methylsulfanyl)propylamine contacts are provided by residues Q68, D92, E112, D143–G144, and D161. D161 serves as the catalytic Proton acceptor. Putrescine is bound by residues D161 to D164 and Y229.

It belongs to the spermidine/spermine synthase family.

It catalyses the reaction S-adenosyl 3-(methylsulfanyl)propylamine + putrescine = S-methyl-5'-thioadenosine + spermidine + H(+). The protein operates within amine and polyamine biosynthesis; spermidine biosynthesis; spermidine from putrescine: step 1/1. In terms of biological role, catalyzes the production of spermidine from putrescine and decarboxylated S-adenosylmethionine (dcSAM). Has a strong preference for putrescine as substrate. This chain is Spermidine synthase (spsA), found in Dictyostelium discoideum (Social amoeba).